A 368-amino-acid polypeptide reads, in one-letter code: D-amino-acid oxidase (368 aa).

Residues Ala11, Ser14, Lys35, His36, Cys46, Ser47, Gly51, Asn53, and Phe174 each contribute to the FAD site. A disulfide bridge links Cys230 with Cys285. The (R)-lactate site is built by Tyr244, Tyr260, and Arg308. Residues Tyr244, Tyr260, and Arg308 each contribute to the anthranilate site. Arg308, Gly334, Gly337, Tyr338, and Gln339 together coordinate FAD. A Microbody targeting signal motif is present at residues 366-368 (ARL).

This sequence belongs to the DAMOX/DASOX family. Homotetramer. The cofactor is FAD. In terms of processing, the disulfide bond might contribute to the high thermal stability of the protein.

The protein resides in the peroxisome matrix. The catalysed reaction is a D-alpha-amino acid + O2 + H2O = a 2-oxocarboxylate + H2O2 + NH4(+). It carries out the reaction D-alanine + O2 + H2O = pyruvate + H2O2 + NH4(+). The enzyme catalyses D-glutamate + O2 + H2O = H2O2 + 2-oxoglutarate + NH4(+). It catalyses the reaction D-serine + O2 + H2O = 3-hydroxypyruvate + H2O2 + NH4(+). The catalysed reaction is D-phenylalanine + O2 + H2O = 3-phenylpyruvate + H2O2 + NH4(+). It carries out the reaction D-arginine + O2 + H2O = 5-guanidino-2-oxopentanoate + H2O2 + NH4(+). The enzyme catalyses D-methionine + O2 + H2O = 4-methylsulfanyl-2-oxobutanoate + H2O2 + NH4(+). It catalyses the reaction D-leucine + O2 + H2O = 4-methyl-2-oxopentanoate + H2O2 + NH4(+). The catalysed reaction is D-lysine + O2 + H2O = 6-amino-2-oxohexanoate + H2O2 + NH4(+). It carries out the reaction D-valine + O2 + H2O = 3-methyl-2-oxobutanoate + H2O2 + NH4(+). The enzyme catalyses D-histidine + O2 + H2O = 3-(imidazol-5-yl)pyruvate + H2O2 + NH4(+). It catalyses the reaction D-glutamine + O2 + H2O = 2-oxoglutaramate + H2O2 + NH4(+). The catalysed reaction is D-isoleucine + O2 + H2O = (R)-3-methyl-2-oxopentanoate + H2O2 + NH4(+). It carries out the reaction D-allo-isoleucine + O2 + H2O = (S)-3-methyl-2-oxopentanoate + H2O2 + NH4(+). The enzyme catalyses D-threonine + O2 + H2O = (S)-3-hydroxy-2-oxobutanoate + H2O2 + NH4(+). It catalyses the reaction D-asparagine + O2 + H2O = 2-oxosuccinamate + H2O2 + NH4(+). The catalysed reaction is D-tryptophan + O2 + H2O = indole-3-pyruvate + H2O2 + NH4(+). It carries out the reaction D-tyrosine + O2 + H2O = 3-(4-hydroxyphenyl)pyruvate + H2O2 + NH4(+). Its activity is regulated as follows. Partially inhibited by benzoate, crotonate, and D-malate. Catalyzes the oxidative deamination of D-amino acids with broad substrate specificity. Enables the organism to utilize D-amino acids as a source of nutrients. Unusually, has high activity on D-glutamate. This is D-amino-acid oxidase from Talaromyces emersonii (Thermophilic fungus).